We begin with the raw amino-acid sequence, 508 residues long: Maturase K (508 aa).

It belongs to the intron maturase 2 family. MatK subfamily.

It is found in the plastid. Its subcellular location is the chloroplast. Functionally, usually encoded in the trnK tRNA gene intron. Probably assists in splicing its own and other chloroplast group II introns. The chain is Maturase K from Cunninghamia lanceolata (China fir).